The following is a 434-amino-acid chain: Alpha-enolase (434 aa).

At serine 2 the chain carries N-acetylserine. An N6-acetyllysine modification is found at lysine 5. Residue serine 27 is modified to Phosphoserine. Residue serine 40 participates in Mg(2+) binding. A Phosphotyrosine modification is found at tyrosine 44. Lysine 60 is modified (N6-acetyllysine; alternate). Lysine 60 is subject to N6-succinyllysine; alternate. N6-acetyllysine occurs at positions 64 and 71. Lysine 89 is modified (N6-acetyllysine; alternate). An N6-succinyllysine; alternate modification is found at lysine 89. N6-acetyllysine occurs at positions 92 and 126. Substrate-binding residues include histidine 158 and glutamate 167. Lysine 193 and lysine 199 each carry N6-acetyllysine. Lysine 202 carries the N6-acetyllysine; alternate modification. Residue lysine 202 forms a Glycyl lysine isopeptide (Lys-Gly) (interchain with G-Cter in SUMO2); alternate linkage. Glutamate 210 serves as the catalytic Proton donor. An N6-acetyllysine; alternate mark is found at lysine 228 and lysine 233. An N6-succinyllysine; alternate modification is found at lysine 228. Residue lysine 228 is modified to N6-(2-hydroxyisobutyryl)lysine; alternate. Lysine 233 carries the post-translational modification N6-malonyllysine; alternate. Aspartate 245 serves as a coordination point for Mg(2+). The residue at position 254 (serine 254) is a Phosphoserine. An N6-acetyllysine modification is found at lysine 256. Residues serine 263 and serine 272 each carry the phosphoserine modification. Lysine 281 carries the N6-acetyllysine; alternate modification. Lysine 281 is subject to N6-(2-hydroxyisobutyryl)lysine; alternate. Lysine 285 carries the N6-acetyllysine modification. Tyrosine 287 is modified (phosphotyrosine). A Phosphoserine modification is found at serine 291. Residues glutamate 293 and aspartate 318 each contribute to the Mg(2+) site. Positions 293 and 318 each coordinate substrate. Residues lysine 335 and lysine 343 each carry the N6-acetyllysine modification. Lysine 343 functions as the Proton acceptor in the catalytic mechanism. Substrate contacts are provided by residues 370–373 (SHRS) and lysine 394. A required for interaction with PLG region spans residues 405–434 (AKYNQLLRIEEELGSKAKFAGRNFRNPLAK). N6-acetyllysine is present on lysine 406. Lysine 420 bears the N6-acetyllysine; alternate mark. The residue at position 420 (lysine 420) is an N6-succinyllysine; alternate. Lysine 420 is modified (N6-malonyllysine; alternate).

This sequence belongs to the enolase family. As to quaternary structure, mammalian enolase is composed of 3 isozyme subunits, alpha, beta and gamma, which can form homodimers or heterodimers which are cell-type and development-specific. ENO1 interacts with PLG in the neuronal plasma membrane and promotes its activation. The C-terminal lysine is required for this binding. Interacts with ENO4 and PGAM2. Interacts with CMTM6. Mg(2+) is required as a cofactor. Post-translationally, ISGylated. In terms of processing, lysine 2-hydroxyisobutyrylation (Khib) by p300/EP300 activates the phosphopyruvate hydratase activity.

It is found in the cytoplasm. The protein resides in the cell membrane. The catalysed reaction is (2R)-2-phosphoglycerate = phosphoenolpyruvate + H2O. It participates in carbohydrate degradation; glycolysis; pyruvate from D-glyceraldehyde 3-phosphate: step 4/5. Functionally, glycolytic enzyme the catalyzes the conversion of 2-phosphoglycerate to phosphoenolpyruvate. In addition to glycolysis, involved in various processes such as growth control, hypoxia tolerance and allergic responses. May also function in the intravascular and pericellular fibrinolytic system due to its ability to serve as a receptor and activator of plasminogen on the cell surface of several cell-types such as leukocytes and neurons. Stimulates immunoglobulin production. The polypeptide is Alpha-enolase (ENO1) (Pongo abelii (Sumatran orangutan)).